We begin with the raw amino-acid sequence, 232 residues long: 5'-methylthioadenosine/S-adenosylhomocysteine nucleosidase (232 aa).

The active-site Proton acceptor is the Glu12. Substrate is bound by residues Gly78, Met153, and 174 to 175 (ME). Catalysis depends on Asp198, which acts as the Proton donor.

Belongs to the PNP/UDP phosphorylase family. MtnN subfamily.

It carries out the reaction S-adenosyl-L-homocysteine + H2O = S-(5-deoxy-D-ribos-5-yl)-L-homocysteine + adenine. The enzyme catalyses S-methyl-5'-thioadenosine + H2O = 5-(methylsulfanyl)-D-ribose + adenine. It catalyses the reaction 5'-deoxyadenosine + H2O = 5-deoxy-D-ribose + adenine. The protein operates within amino-acid biosynthesis; L-methionine biosynthesis via salvage pathway; S-methyl-5-thio-alpha-D-ribose 1-phosphate from S-methyl-5'-thioadenosine (hydrolase route): step 1/2. In terms of biological role, catalyzes the irreversible cleavage of the glycosidic bond in both 5'-methylthioadenosine (MTA) and S-adenosylhomocysteine (SAH/AdoHcy) to adenine and the corresponding thioribose, 5'-methylthioribose and S-ribosylhomocysteine, respectively. Also cleaves 5'-deoxyadenosine, a toxic by-product of radical S-adenosylmethionine (SAM) enzymes, into 5-deoxyribose and adenine. The protein is 5'-methylthioadenosine/S-adenosylhomocysteine nucleosidase of Geobacillus sp. (strain WCH70).